A 259-amino-acid chain; its full sequence is Major cell-binding factor (259 aa).

The signal sequence occupies residues 1-26 (MVFRKSLLKLAVFALGACVAFSNANA).

The protein belongs to the bacterial solute-binding protein 3 family.

The protein resides in the cell surface. In terms of biological role, common antigen and a major cell adherence molecule. Most probably involved, with PEB1C, in a binding-protein-dependent transport system for an amino acid. May be involved in binding to intestinal cells. This is Major cell-binding factor (peb1A) from Campylobacter jejuni subsp. jejuni serotype O:23/36 (strain 81-176).